The chain runs to 958 residues: Protein translocase subunit SecA (958 aa).

ATP-binding positions include Gln86, 104-108 (GEGKT), and Asp494. 2 disordered regions span residues 863-883 (AAATGESAPAEPETDDEAEKT) and 902-937 (QPISHAEGKVPANKRPKSEELHSPWADGRTFPGTGK). Zn(2+) contacts are provided by Cys941, Cys943, Cys952, and His953.

It belongs to the SecA family. As to quaternary structure, monomer and homodimer. Part of the essential Sec protein translocation apparatus which comprises SecA, SecYEG and auxiliary proteins SecDF. Other proteins may also be involved. Zn(2+) serves as cofactor.

Its subcellular location is the cell membrane. It is found in the cytoplasm. The catalysed reaction is ATP + H2O + cellular proteinSide 1 = ADP + phosphate + cellular proteinSide 2.. Functionally, part of the Sec protein translocase complex. Interacts with the SecYEG preprotein conducting channel. Has a central role in coupling the hydrolysis of ATP to the transfer of proteins into and across the cell membrane, serving as an ATP-driven molecular motor driving the stepwise translocation of polypeptide chains across the membrane. The protein is Protein translocase subunit SecA of Bifidobacterium adolescentis (strain ATCC 15703 / DSM 20083 / NCTC 11814 / E194a).